The primary structure comprises 258 residues: Aspartate/glutamate leucyltransferase (258 aa).

This sequence belongs to the R-transferase family. Bpt subfamily.

It is found in the cytoplasm. The enzyme catalyses N-terminal L-glutamyl-[protein] + L-leucyl-tRNA(Leu) = N-terminal L-leucyl-L-glutamyl-[protein] + tRNA(Leu) + H(+). The catalysed reaction is N-terminal L-aspartyl-[protein] + L-leucyl-tRNA(Leu) = N-terminal L-leucyl-L-aspartyl-[protein] + tRNA(Leu) + H(+). Functions in the N-end rule pathway of protein degradation where it conjugates Leu from its aminoacyl-tRNA to the N-termini of proteins containing an N-terminal aspartate or glutamate. This is Aspartate/glutamate leucyltransferase from Bradyrhizobium sp. (strain BTAi1 / ATCC BAA-1182).